We begin with the raw amino-acid sequence, 286 residues long: CLA biosynthesis dehydrogenase/reductase (286 aa).

6 residues coordinate NAD(+): D37, D63, V64, N90, Y156, and K160. The active-site Proton acceptor is the Y156.

This sequence belongs to the short-chain dehydrogenases/reductases (SDR) family.

The protein resides in the cytoplasm. It catalyses the reaction (10S)-hydroxy-(12Z)-octadecenoate + NAD(+) = 10-oxo-(12Z)-octadecenoate + NADH + H(+). It carries out the reaction 10-oxo-(11E)-octadecenoate + NADH + H(+) = 10-hydroxy-(11E)-octadecenoate + NAD(+). The catalysed reaction is 10-oxooctadecanoate + NADH + H(+) = 10-hydroxyoctadecanoate + NAD(+). The protein operates within lipid metabolism; fatty acid metabolism. Its function is as follows. Is involved in a saturation metabolic pathway of polyunsaturated fatty acids, that detoxifies unsaturated fatty acids and generates hydroxy fatty acids, oxo fatty acids, conjugated fatty acids such as conjugated linoleic acids (CLAs), and partially saturated trans-fatty acids as intermediates. CLA-DH catalyzes the dehydrogenation/reduction steps in the production of 10-oxo-(12Z)-octadecenoate, 10-hydroxy-(11E)-octadecenoate and 10-hydroxyoctadecanoate during linoleate metabolism. As part of the gut microbiome, this enzyme modifies host fatty acid composition and is expected to improve human health by altering lipid metabolism related to the onset of metabolic syndrome. This is CLA biosynthesis dehydrogenase/reductase from Lactiplantibacillus plantarum (Lactobacillus plantarum).